Consider the following 124-residue polypeptide: Small ribosomal subunit protein uS12 (124 aa).

A disordered region spans residues 105–124 (QGVKNRKQARSRYGAKKEKG). The segment covering 108-118 (KNRKQARSRYG) has biased composition (basic residues).

Belongs to the universal ribosomal protein uS12 family. In terms of assembly, part of the 30S ribosomal subunit. Contacts proteins S8 and S17. May interact with IF1 in the 30S initiation complex.

With S4 and S5 plays an important role in translational accuracy. Its function is as follows. Interacts with and stabilizes bases of the 16S rRNA that are involved in tRNA selection in the A site and with the mRNA backbone. Located at the interface of the 30S and 50S subunits, it traverses the body of the 30S subunit contacting proteins on the other side and probably holding the rRNA structure together. The combined cluster of proteins S8, S12 and S17 appears to hold together the shoulder and platform of the 30S subunit. The chain is Small ribosomal subunit protein uS12 (rpsL) from Mycobacterium bovis (strain ATCC BAA-935 / AF2122/97).